A 452-amino-acid chain; its full sequence is Probable ECA polymerase (452 aa).

11 helical membrane passes run 6-26 (FSGLLVVWLLSTLFIATLTWF), 37-57 (VFFSLLFLLTFFFGFPLTSVL), 63-83 (VGVAPPEILLQALLSAACFYG), 118-138 (VILMGIALVSVAIFFMHNGFL), 155-175 (GVALKRFFYFFIPAMLVVYFL), 181-201 (AWLFFLVSTVAFGLLTYMIVG), 207-227 (IIIAFAIFLFIGIIRGWISLW), 228-248 (MLAAAGVLGIVGMFWLALKRY), 341-361 (LVVMGGALFIPLGAIVVGLII), 378-398 (YKAAILHSFCFGAIFNMIVLA), and 410-430 (VFFLVVFGASLLVAKLLFWLF).

The protein belongs to the WzyE family. As to quaternary structure, probably part of a complex composed of WzxE, WzyE and WzzE.

The protein resides in the cell inner membrane. It participates in bacterial outer membrane biogenesis; enterobacterial common antigen biosynthesis. Probably involved in the polymerization of enterobacterial common antigen (ECA) trisaccharide repeat units. The chain is Probable ECA polymerase from Salmonella choleraesuis (strain SC-B67).